Here is a 629-residue protein sequence, read N- to C-terminus: Transferrin (629 aa).

The first 21 residues, 1-21 (MTIKNVLKLAALLGVLALVQA), serve as a signal peptide directing secretion. Transferrin-like domains lie at 26 to 366 (YRMC…ERDG) and 372 to 621 (MKMC…GLKC). 2 disulfide bridges follow: cysteine 29–cysteine 63 and cysteine 38–cysteine 54. Tyrosine 111 provides a ligand contact to Fe(3+). 6 cysteine pairs are disulfide-bonded: cysteine 135–cysteine 231, cysteine 184–cysteine 210, cysteine 207–cysteine 216, cysteine 270–cysteine 283, cysteine 375–cysteine 409, and cysteine 385–cysteine 403. Positions 137, 141, 143, and 144 each coordinate hydrogencarbonate. Tyrosine 225 contributes to the Fe(3+) binding site. Fe(3+) is bound by residues aspartate 408 and histidine 561.

It belongs to the transferrin family. In terms of assembly, monomer.

Functionally, transferrins are iron binding transport proteins which bind Fe(3+) ion in association with the binding of an anion, usually bicarbonate. This transferrin binds only one Fe(3+) ion per protein molecule. Transports iron ions from the hemolymph into the eggs during the vitellogenic stage (oogenesis). This is Transferrin from Sarcophaga peregrina (Flesh fly).